The chain runs to 1302 residues: Ubiquitin conjugation factor E4 B (1302 aa).

Position 1 is an N-acetylmethionine (M1). The disordered stretch occupies residues 1 to 155; it reads MEELSADEIR…EPSSGPEVSE (155 aa). Over residues 16–33 the composition is skewed to low complexity; it reads RLAGGQTSQPTTPLTSPQ. Phosphoserine is present on residues S23 and S31. A compositionally biased stretch (polar residues) spans 51–64; the sequence is QSLGLNVHNMTPAT. Positions 76-99 are enriched in low complexity; it reads SQSSEGVSSLSSSPSNSLETQSQS. S84, S88, S90, S101, S103, S105, and S124 each carry phosphoserine. Positions 134–147 are enriched in basic and acidic residues; sequence NDRREKRSLSDKEP. S238 carries the post-translational modification Phosphoserine. Residues 299-327 are compositionally biased toward polar residues; the sequence is AASQLAVPSTPLSPHSAASGTAAGSQPSS. The segment at 299–406 is disordered; that stretch reads AASQLAVPST…SPSLGASGGA (108 aa). Low complexity predominate over residues 340–374; that stretch reads ASSGVSILSSSPSPPALASSPQAVPASSSRQRPSS. S383 carries the post-translational modification Phosphoserine. Residues 384–400 show a composition bias toward low complexity; that stretch reads PSATSRRPSSLRISPSL. A phosphoserine mark is found at S803 and S969. Residues 1057-1077 form a disordered region; sequence NKEQWDQLPRDQQQARQSQLA. Low complexity predominate over residues 1066 to 1077; the sequence is RDQQQARQSQLA. A U-box domain is found at 1227–1300; that stretch reads DAPDEFRDPL…QAWMREKQNS (74 aa). At S1265 the chain carries Phosphoserine.

The protein belongs to the ubiquitin conjugation factor E4 family. Interacts with VCP/p97. Interacts with STUB1/CHIP and UNC45B. Proteolytically cleaved by caspases during apoptosis. Cleaved efficiently at Asp-123 by caspase-6 and granzyme B. Cleaved with approximately 10-fold less efficiency at Asp-109 by caspase-3 and caspase-7. In terms of tissue distribution, expressed in differentiated myotubes (at protein level). Highest expression in ovary, testis, heart and skeletal muscle. Expression is low in colon, thymus and peripheral blood leukocytes. Almost undetectable in lung and spleen.

Its subcellular location is the cytoplasm. The protein localises to the nucleus. The enzyme catalyses S-ubiquitinyl-[E2 ubiquitin-conjugating enzyme]-L-cysteine + [acceptor protein]-L-lysine = [E2 ubiquitin-conjugating enzyme]-L-cysteine + N(6)-ubiquitinyl-[acceptor protein]-L-lysine.. The protein operates within protein modification; protein ubiquitination. Ubiquitin-protein ligase that probably functions as an E3 ligase in conjunction with specific E1 and E2 ligases. May also function as an E4 ligase mediating the assembly of polyubiquitin chains on substrates ubiquitinated by another E3 ubiquitin ligase. May regulate myosin assembly in striated muscles together with STUB1 and VCP/p97 by targeting myosin chaperone UNC45B for proteasomal degradation. This chain is Ubiquitin conjugation factor E4 B, found in Homo sapiens (Human).